The chain runs to 173 residues: MTTIVCVRKDGKVAIGGDGQATLGNCVEKGTVRKVRRMYKDKVVTGFAGSTADAFILRDLFEKKLELHQGHLIKSAVELAKEWRTERSLRKLEAMMIVANESEFLLVSGSGDVIEPEQDVLAIGSGGNYAKAAALALLRTENNLSAKEIVAEALKIAGDIDIYSNHNHVIEEV.

Residue threonine 2 is part of the active site. The Na(+) site is built by glycine 158, aspartate 161, and serine 164.

Belongs to the peptidase T1B family. HslV subfamily. A double ring-shaped homohexamer of HslV is capped on each side by a ring-shaped HslU homohexamer. The assembly of the HslU/HslV complex is dependent on binding of ATP.

Its subcellular location is the cytoplasm. The enzyme catalyses ATP-dependent cleavage of peptide bonds with broad specificity.. Allosterically activated by HslU binding. Functionally, protease subunit of a proteasome-like degradation complex believed to be a general protein degrading machinery. The protein is ATP-dependent protease subunit HslV of Actinobacillus pleuropneumoniae serotype 5b (strain L20).